We begin with the raw amino-acid sequence, 901 residues long: ABC transporter A family member 8 (901 aa).

7 consecutive transmembrane segments (helical) span residues leucine 34–threonine 54, isoleucine 315–isoleucine 335, phenylalanine 369–leucine 389, valine 402–phenylalanine 422, threonine 427–phenylalanine 447, tryptophan 460–tyrosine 477, and cysteine 508–isoleucine 528. Positions valine 586–threonine 823 constitute an ABC transporter domain. ATP is bound at residue glycine 624–threonine 631.

This sequence belongs to the ABC transporter superfamily. ABCA family. CPR flippase (TC 3.A.1.211) subfamily.

Its subcellular location is the membrane. This Arabidopsis thaliana (Mouse-ear cress) protein is ABC transporter A family member 8 (ABCA8).